The sequence spans 338 residues: NAD kinase (338 aa).

Aspartate 66 serves as the catalytic Proton acceptor. NAD(+) contacts are provided by residues 66 to 67 (DG), arginine 71, 141 to 142 (ND), lysine 152, aspartate 171, 182 to 187 (TAYAFS), and alanine 206. Residues 317–338 (GDAGVAGTEPDKPGERDGKAGA) are disordered. Residues 325 to 338 (EPDKPGERDGKAGA) show a composition bias toward basic and acidic residues.

Belongs to the NAD kinase family. Requires a divalent metal cation as cofactor.

It localises to the cytoplasm. It catalyses the reaction NAD(+) + ATP = ADP + NADP(+) + H(+). Functionally, involved in the regulation of the intracellular balance of NAD and NADP, and is a key enzyme in the biosynthesis of NADP. Catalyzes specifically the phosphorylation on 2'-hydroxyl of the adenosine moiety of NAD to yield NADP. The polypeptide is NAD kinase (Bifidobacterium longum subsp. infantis (strain ATCC 15697 / DSM 20088 / JCM 1222 / NCTC 11817 / S12)).